The following is a 107-amino-acid chain: Acetyl-CoA acetyltransferase (107 aa).

Residue Cys-88 is the Acyl-thioester intermediate of the active site.

The protein belongs to the thiolase-like superfamily. Thiolase family. As to quaternary structure, homotetramer.

It localises to the cytoplasm. It carries out the reaction 2 acetyl-CoA = acetoacetyl-CoA + CoA. Catalyzes the condensation of two molecules of acetyl-CoA to produce acetoacetyl-CoA. The polypeptide is Acetyl-CoA acetyltransferase (thi) (Clostridioides difficile (Peptoclostridium difficile)).